A 242-amino-acid polypeptide reads, in one-letter code: Transcription factor TCP17 (242 aa).

The region spanning 33-91 (GKDRHSKVCTVRGLRDRRIRLSVMTAIQVYDLQERLGLSQPSKVIDWLLEVAKNDVDLL) is the TCP domain.

Interacts with SPL. As to expression, expressed in cotyledons, particularly in the vascular region, in leaves, roots, stems, buds, flowers and siliques.

It localises to the nucleus. Plays a pivotal role in the control of morphogenesis of shoot organs by negatively regulating the expression of boundary-specific genes such as CUC genes, probably through the induction of miRNA (e.g. miR164). Participates in ovule development. In Arabidopsis thaliana (Mouse-ear cress), this protein is Transcription factor TCP17 (TCP17).